The chain runs to 705 residues: Endoglucanase (705 aa).

Positions Met-1–Ala-23 are cleaved as a signal peptide. Asn-75 carries an N-linked (GlcNAc...) asparagine glycan. Asp-85 functions as the Nucleophile in the catalytic mechanism. Residues His-390, Asp-428, and Glu-437 contribute to the active site. Positions Asn-455–Glu-556 are disordered. Low complexity predominate over residues Pro-462–Pro-552. The pro/Thr repeats ('hinge') (Pro/Thr box) stretch occupies residues Thr-463–Pro-552.

The protein belongs to the glycosyl hydrolase 9 (cellulase E) family.

It carries out the reaction Endohydrolysis of (1-&gt;4)-beta-D-glucosidic linkages in cellulose, lichenin and cereal beta-D-glucans.. Its function is as follows. May digest the spore cell wall during germination, to release the enclosed amoeba. In Dictyostelium discoideum (Social amoeba), this protein is Endoglucanase (celA).